The chain runs to 271 residues: MKLFGLIGEKLGHSLSPEIHNKVFKDNNIDGLYNLFSVKKDFENNIVESLKCLGVKGANVTIPYKEKVMDQLDIISHEAKAIGAVNTILIKDGKSYGYNTDYYGFGKMLERAKVNIEGNSFFVLGAGGAARSILKYLEDSKAKKIVLVSRDREKAFKKFKDFNINFMSYGELEEINEEFALINTTPCGMYPNINSVAVSEKVIKKFKVAVDIVYNPLETKFLKMAKDNGLKTVDGLFMLVGQGVKAEEIWNGIKVDKSTEEDIYEELKCRF.

Residues 14–16 (SLS) and threonine 61 contribute to the shikimate site. Lysine 65 functions as the Proton acceptor in the catalytic mechanism. Positions 86 and 101 each coordinate shikimate. NADP(+)-binding positions include 125 to 129 (GAGGA) and isoleucine 212. Tyrosine 214 serves as a coordination point for shikimate. Residue glycine 235 coordinates NADP(+).

This sequence belongs to the shikimate dehydrogenase family. As to quaternary structure, homodimer.

It carries out the reaction shikimate + NADP(+) = 3-dehydroshikimate + NADPH + H(+). It functions in the pathway metabolic intermediate biosynthesis; chorismate biosynthesis; chorismate from D-erythrose 4-phosphate and phosphoenolpyruvate: step 4/7. In terms of biological role, involved in the biosynthesis of the chorismate, which leads to the biosynthesis of aromatic amino acids. Catalyzes the reversible NADPH linked reduction of 3-dehydroshikimate (DHSA) to yield shikimate (SA). The sequence is that of Shikimate dehydrogenase (NADP(+)) from Clostridium perfringens (strain ATCC 13124 / DSM 756 / JCM 1290 / NCIMB 6125 / NCTC 8237 / Type A).